Reading from the N-terminus, the 70-residue chain is DNA-directed RNA polymerase subunit omega (70 aa).

It belongs to the RNA polymerase subunit omega family. The RNAP catalytic core consists of 2 alpha, 1 beta, 1 beta' and 1 omega subunit. When a sigma factor is associated with the core the holoenzyme is formed, which can initiate transcription.

The enzyme catalyses RNA(n) + a ribonucleoside 5'-triphosphate = RNA(n+1) + diphosphate. Its function is as follows. Promotes RNA polymerase assembly. Latches the N- and C-terminal regions of the beta' subunit thereby facilitating its interaction with the beta and alpha subunits. The chain is DNA-directed RNA polymerase subunit omega from Thermoanaerobacter sp. (strain X514).